Here is a 201-residue protein sequence, read N- to C-terminus: Recombination protein RecR (201 aa).

The segment at 57-72 (CKSCRTFTEEDECAIC) adopts a C4-type zinc-finger fold. Positions 81-176 (GQLCVVEMPA…KVTRIAHGIP (96 aa)) constitute a Toprim domain.

The protein belongs to the RecR family.

In terms of biological role, may play a role in DNA repair. It seems to be involved in an RecBC-independent recombinational process of DNA repair. It may act with RecF and RecO. This is Recombination protein RecR from Glaesserella parasuis serovar 5 (strain SH0165) (Haemophilus parasuis).